The following is a 495-amino-acid chain: UDP-N-acetylmuramoyl-L-alanyl-D-glutamate--2,6-diaminopimelate ligase (495 aa).

Residues leucine 28, serine 30, and 45–47 (HRV) each bind UDP-N-acetyl-alpha-D-muramoyl-L-alanyl-D-glutamate. 117 to 123 (GTNGKTT) contacts ATP. Residues asparagine 158, 159–160 (TT), serine 186, glutamine 192, and arginine 194 contribute to the UDP-N-acetyl-alpha-D-muramoyl-L-alanyl-D-glutamate site. Lysine 226 is modified (N6-carboxylysine). Meso-2,6-diaminopimelate is bound by residues arginine 394, 418–421 (DNPR), glycine 469, and glutamate 473. The Meso-diaminopimelate recognition motif motif lies at 418 to 421 (DNPR).

Belongs to the MurCDEF family. MurE subfamily. Requires Mg(2+) as cofactor. In terms of processing, carboxylation is probably crucial for Mg(2+) binding and, consequently, for the gamma-phosphate positioning of ATP.

Its subcellular location is the cytoplasm. It catalyses the reaction UDP-N-acetyl-alpha-D-muramoyl-L-alanyl-D-glutamate + meso-2,6-diaminopimelate + ATP = UDP-N-acetyl-alpha-D-muramoyl-L-alanyl-gamma-D-glutamyl-meso-2,6-diaminopimelate + ADP + phosphate + H(+). It participates in cell wall biogenesis; peptidoglycan biosynthesis. Functionally, catalyzes the addition of meso-diaminopimelic acid to the nucleotide precursor UDP-N-acetylmuramoyl-L-alanyl-D-glutamate (UMAG) in the biosynthesis of bacterial cell-wall peptidoglycan. The polypeptide is UDP-N-acetylmuramoyl-L-alanyl-D-glutamate--2,6-diaminopimelate ligase (Histophilus somni (strain 129Pt) (Haemophilus somnus)).